Consider the following 632-residue polypeptide: Cleavage stimulation factor subunit 2 tau variant (632 aa).

In terms of domain architecture, RRM spans 16-94; the sequence is RSVFVGNIPY…RALRVDNAAS (79 aa). Disordered regions lie at residues 201-296 and 365-433; these read IPGK…PGGA and YMGP…TRPM. Over residues 213-233 the composition is skewed to pro residues; the sequence is PGGPGPSGPGGPGPGPAPGLC. Residues 234 to 244 show a composition bias toward low complexity; that stretch reads PGPNVMLNQQN. Residues 275–287 are compositionally biased toward pro residues; that stretch reads APGPIPAAVPGPG. Positions 365 to 375 are enriched in low complexity; it reads YMGPPHQGPPM. 2 stretches are compositionally biased toward basic and acidic residues: residues 377 to 390 and 420 to 433; these read HGHD…HDMR and RGGR…TRPM. Residues 428–432 form a 1-1; approximate repeat; that stretch reads METRP. Residues 428–466 are 8 X 5 AA tandem repeats of M-E-T-R-[AG]; sequence METRPMETEVLEPRGMERRMETCAMETRGMDARGLEMRG. The 1-2; approximate repeat unit spans residues 433–437; sequence METEV. A 1-3; approximate repeat occupies 438 to 442; that stretch reads LEPRG. Residues 443–446 form a 1-4; approximate repeat; it reads MERR. Residues 447–451 form a 1-5; approximate repeat; the sequence is METCA. The 1-6 repeat unit spans residues 452–456; sequence METRG. Residues 457–461 form a 1-7; approximate repeat; the sequence is MDARG. The stretch at 462–466 is one 1-8; approximate repeat; the sequence is LEMRG. A 2-1; approximate repeat occupies 508–512; sequence GGTMQ. The tract at residues 508 to 565 is 12 X 5 AA tandem repeats of G-[AT]-G-[MI]-Q; that stretch reads GGTMQGAGIQGGGMQGAGMQGGGMQGAGMQGGGMQGAGMQAGMQGASMQGGMQGAGMQ. The 2-2 repeat unit spans residues 513–517; that stretch reads GAGIQ. A 2-3; approximate repeat occupies 518 to 522; it reads GGGMQ. Positions 519–543 are enriched in gly residues; that stretch reads GGMQGAGMQGGGMQGAGMQGGGMQG. The interval 519–590 is disordered; sequence GGMQGAGMQG…GQSQVTPQDQ (72 aa). One copy of the 2-4 repeat lies at 523–527; that stretch reads GAGMQ. The stretch at 528-532 is one 2-5; approximate repeat; sequence GGGMQ. The 2-6 repeat unit spans residues 533–537; the sequence is GAGMQ. One copy of the 2-7; approximate repeat lies at 538 to 542; sequence GGGMQ. The stretch at 543–547 is one 2-8 repeat; it reads GAGMQ. Low complexity predominate over residues 544–557; that stretch reads AGMQAGMQGASMQG. One copy of the 2-9; approximate repeat lies at 548–551; it reads AGMQ. The 2-10; approximate repeat unit spans residues 552 to 556; that stretch reads GASMQ. Residues 557–560 form a 2-11; approximate repeat; the sequence is GGMQ. A compositionally biased stretch (gly residues) spans 558–574; that stretch reads GMQGAGMQGASKQGGGQ. A 2-12 repeat occupies 561 to 565; sequence GAGMQ. Over residues 575 to 584 the composition is skewed to low complexity; sequence PSSFSPGQSQ. Phosphoserine is present on S579.

Expressed in testes, where it is restricted to pachytene spermatocytes and spermatids, and in the brain (at protein level).

The protein localises to the nucleus. Functionally, may play a significant role in AAUAAA-independent mRNA polyadenylation in germ cells. Directly involved in the binding to pre-mRNAs. The protein is Cleavage stimulation factor subunit 2 tau variant (Cstf2t) of Mus musculus (Mouse).